The sequence spans 207 residues: Protein GrpE (207 aa).

2 stretches are compositionally biased toward basic and acidic residues: residues 1 to 11 (MEENRDVKNEE) and 57 to 66 (DLVKNQEEEN). The tract at residues 1-66 (MEENRDVKNE…DLVKNQEEEN (66 aa)) is disordered.

Belongs to the GrpE family. Homodimer.

The protein localises to the cytoplasm. In terms of biological role, participates actively in the response to hyperosmotic and heat shock by preventing the aggregation of stress-denatured proteins, in association with DnaK and GrpE. It is the nucleotide exchange factor for DnaK and may function as a thermosensor. Unfolded proteins bind initially to DnaJ; upon interaction with the DnaJ-bound protein, DnaK hydrolyzes its bound ATP, resulting in the formation of a stable complex. GrpE releases ADP from DnaK; ATP binding to DnaK triggers the release of the substrate protein, thus completing the reaction cycle. Several rounds of ATP-dependent interactions between DnaJ, DnaK and GrpE are required for fully efficient folding. The polypeptide is Protein GrpE (Clostridium beijerinckii (strain ATCC 51743 / NCIMB 8052) (Clostridium acetobutylicum)).